The following is a 70-amino-acid chain: Probable protein transport protein Sec61 subunit gamma (70 aa).

The Cytoplasmic portion of the chain corresponds to 1-39; that stretch reads MADQIQEILDVPREFLKDGIQFIKKCQKPDRREFIKISQ. A helical membrane pass occupies residues 40–58; that stretch reads AVGTGFLIMGAVGYLVKLI. The Extracellular segment spans residues 59-70; it reads HIPLNQVLVGGA.

Belongs to the SecE/SEC61-gamma family. As to quaternary structure, heterotrimeric complex composed of SEC61-alpha, SEC61-beta and SEC61-gamma.

The protein localises to the endoplasmic reticulum membrane. Functionally, necessary for protein translocation in the endoplasmic reticulum. The sequence is that of Probable protein transport protein Sec61 subunit gamma from Neurospora crassa (strain ATCC 24698 / 74-OR23-1A / CBS 708.71 / DSM 1257 / FGSC 987).